Consider the following 538-residue polypeptide: Bifunctional purine biosynthesis protein PurH (538 aa).

In terms of domain architecture, MGS-like spans 8–158 (IPAPDLVPVR…KNHAYVAIVT (151 aa)).

This sequence belongs to the PurH family.

It carries out the reaction (6R)-10-formyltetrahydrofolate + 5-amino-1-(5-phospho-beta-D-ribosyl)imidazole-4-carboxamide = 5-formamido-1-(5-phospho-D-ribosyl)imidazole-4-carboxamide + (6S)-5,6,7,8-tetrahydrofolate. The enzyme catalyses IMP + H2O = 5-formamido-1-(5-phospho-D-ribosyl)imidazole-4-carboxamide. The protein operates within purine metabolism; IMP biosynthesis via de novo pathway; 5-formamido-1-(5-phospho-D-ribosyl)imidazole-4-carboxamide from 5-amino-1-(5-phospho-D-ribosyl)imidazole-4-carboxamide (10-formyl THF route): step 1/1. It functions in the pathway purine metabolism; IMP biosynthesis via de novo pathway; IMP from 5-formamido-1-(5-phospho-D-ribosyl)imidazole-4-carboxamide: step 1/1. In Mesorhizobium japonicum (strain LMG 29417 / CECT 9101 / MAFF 303099) (Mesorhizobium loti (strain MAFF 303099)), this protein is Bifunctional purine biosynthesis protein PurH.